Consider the following 239-residue polypeptide: Serine protease SplC (239 aa).

An N-terminal signal peptide occupies residues 1-36 (MNKNIVIKSMAALAILTSVTGINAAVVEETQQIANA). Catalysis depends on charge relay system residues histidine 75, aspartate 113, and serine 193.

This sequence belongs to the peptidase S1B family.

It is found in the secreted. This Staphylococcus aureus protein is Serine protease SplC (splC).